The primary structure comprises 1035 residues: Translation initiation factor IF-2 (1035 aa).

Residues 56-66 (KDDKSNTDDNK) are compositionally biased toward basic and acidic residues. 2 disordered regions span residues 56–80 (KDDK…SSEA) and 114–402 (ANDA…VIKN). The span at 68–78 (ASAHSVAQHSS) shows a compositional bias: polar residues. Composition is skewed to basic and acidic residues over residues 114 to 137 (ANDA…RVET) and 146 to 200 (LVRE…EIKD). The span at 219 to 228 (DSATNVNLNE) shows a compositional bias: polar residues. Over residues 229 to 238 (SIDKDKKTND) the composition is skewed to basic and acidic residues. The segment covering 239–253 (NRQVSTDNSAVNNEE) has biased composition (polar residues). The segment covering 259-315 (LNKKDMDKKNNNKKNEAKKNAEKKNEAKKNEKNDNKGGNAKKNEHRSPDMKKNDSNR) has biased composition (basic and acidic residues). The segment covering 316-325 (PQDANKQNSK) has biased composition (polar residues). Composition is skewed to basic and acidic residues over residues 327-347 (AADK…EIPK) and 354-385 (QKEE…KEQP). Positions 537-706 (PRPPVVVVMG…LLAADMLELK (170 aa)) constitute a tr-type G domain. The G1 stretch occupies residues 546–553 (GHVDHGKT). A GTP-binding site is contributed by 546–553 (GHVDHGKT). Positions 571–575 (GITQH) are G2. Positions 592-595 (DTPG) are G3. Residues 592–596 (DTPGH) and 646–649 (NKID) each bind GTP. The G4 stretch occupies residues 646–649 (NKID). The tract at residues 682–684 (SAK) is G5.

This sequence belongs to the TRAFAC class translation factor GTPase superfamily. Classic translation factor GTPase family. IF-2 subfamily.

The protein resides in the cytoplasm. One of the essential components for the initiation of protein synthesis. Protects formylmethionyl-tRNA from spontaneous hydrolysis and promotes its binding to the 30S ribosomal subunits. Also involved in the hydrolysis of GTP during the formation of the 70S ribosomal complex. The chain is Translation initiation factor IF-2 from Acetivibrio thermocellus (strain ATCC 27405 / DSM 1237 / JCM 9322 / NBRC 103400 / NCIMB 10682 / NRRL B-4536 / VPI 7372) (Clostridium thermocellum).